A 315-amino-acid chain; its full sequence is DNA-directed RNA polymerase subunit alpha (315 aa).

Positions M1–T228 are alpha N-terminal domain (alpha-NTD). An alpha C-terminal domain (alpha-CTD) region spans residues K245–E315.

This sequence belongs to the RNA polymerase alpha chain family. In terms of assembly, homodimer. The RNAP catalytic core consists of 2 alpha, 1 beta, 1 beta' and 1 omega subunit. When a sigma factor is associated with the core the holoenzyme is formed, which can initiate transcription.

The catalysed reaction is RNA(n) + a ribonucleoside 5'-triphosphate = RNA(n+1) + diphosphate. DNA-dependent RNA polymerase catalyzes the transcription of DNA into RNA using the four ribonucleoside triphosphates as substrates. The protein is DNA-directed RNA polymerase subunit alpha of Clostridium perfringens (strain ATCC 13124 / DSM 756 / JCM 1290 / NCIMB 6125 / NCTC 8237 / Type A).